A 102-amino-acid chain; its full sequence is ATP-dependent Clp protease adapter protein ClpS (102 aa).

The protein belongs to the ClpS family. Binds to the N-terminal domain of the chaperone ClpA.

Its function is as follows. Involved in the modulation of the specificity of the ClpAP-mediated ATP-dependent protein degradation. This Shewanella frigidimarina (strain NCIMB 400) protein is ATP-dependent Clp protease adapter protein ClpS.